Reading from the N-terminus, the 354-residue chain is N-acetyl-gamma-glutamyl-phosphate reductase (354 aa).

Cys-156 is a catalytic residue.

The protein belongs to the NAGSA dehydrogenase family. Type 1 subfamily.

The protein resides in the cytoplasm. It carries out the reaction N-acetyl-L-glutamate 5-semialdehyde + phosphate + NADP(+) = N-acetyl-L-glutamyl 5-phosphate + NADPH + H(+). Its pathway is amino-acid biosynthesis; L-arginine biosynthesis; N(2)-acetyl-L-ornithine from L-glutamate: step 3/4. Functionally, catalyzes the NADPH-dependent reduction of N-acetyl-5-glutamyl phosphate to yield N-acetyl-L-glutamate 5-semialdehyde. The chain is N-acetyl-gamma-glutamyl-phosphate reductase from Bordetella pertussis (strain Tohama I / ATCC BAA-589 / NCTC 13251).